The sequence spans 964 residues: Glycine dehydrogenase (decarboxylating) (964 aa).

The residue at position 710 (Lys-710) is an N6-(pyridoxal phosphate)lysine.

It belongs to the GcvP family. As to quaternary structure, the glycine cleavage system is composed of four proteins: P, T, L and H. Pyridoxal 5'-phosphate is required as a cofactor.

It catalyses the reaction N(6)-[(R)-lipoyl]-L-lysyl-[glycine-cleavage complex H protein] + glycine + H(+) = N(6)-[(R)-S(8)-aminomethyldihydrolipoyl]-L-lysyl-[glycine-cleavage complex H protein] + CO2. The glycine cleavage system catalyzes the degradation of glycine. The P protein binds the alpha-amino group of glycine through its pyridoxal phosphate cofactor; CO(2) is released and the remaining methylamine moiety is then transferred to the lipoamide cofactor of the H protein. The polypeptide is Glycine dehydrogenase (decarboxylating) (Saccharophagus degradans (strain 2-40 / ATCC 43961 / DSM 17024)).